The primary structure comprises 228 residues: Protein Iojap, chloroplastic (228 aa).

The segment at methionine 1 to proline 54 is disordered. The transit peptide at methionine 1–arginine 62 directs the protein to the chloroplast.

This sequence belongs to the Iojap/RsfS family. As to quaternary structure, interacts with chloroplast ribosomal protein uL14c (rpl14).

It localises to the plastid. Its subcellular location is the chloroplast. In terms of biological role, may be a ribosome silencing factor (Potential). Involved in plastid biogenesis. Plastids affected by a mutation in Iojap lose the ability to perform translation and lack plastid ribosomes. This Zea mays (Maize) protein is Protein Iojap, chloroplastic (Ij).